Reading from the N-terminus, the 389-residue chain is 1-deoxy-D-xylulose 5-phosphate reductoisomerase (389 aa).

Residues S11, G12, S13, V14, N39, and N122 each contribute to the NADPH site. Residue K123 coordinates 1-deoxy-D-xylulose 5-phosphate. E124 lines the NADPH pocket. D148 is a binding site for Mn(2+). 1-deoxy-D-xylulose 5-phosphate contacts are provided by S149, E150, S174, and H197. Mn(2+) is bound at residue E150. Residue G203 participates in NADPH binding. Positions 210, 215, 216, and 219 each coordinate 1-deoxy-D-xylulose 5-phosphate. A Mn(2+)-binding site is contributed by E219.

This sequence belongs to the DXR family. The cofactor is Mg(2+). Mn(2+) is required as a cofactor.

It catalyses the reaction 2-C-methyl-D-erythritol 4-phosphate + NADP(+) = 1-deoxy-D-xylulose 5-phosphate + NADPH + H(+). It participates in isoprenoid biosynthesis; isopentenyl diphosphate biosynthesis via DXP pathway; isopentenyl diphosphate from 1-deoxy-D-xylulose 5-phosphate: step 1/6. In terms of biological role, catalyzes the NADPH-dependent rearrangement and reduction of 1-deoxy-D-xylulose-5-phosphate (DXP) to 2-C-methyl-D-erythritol 4-phosphate (MEP). The chain is 1-deoxy-D-xylulose 5-phosphate reductoisomerase from Leptospira interrogans serogroup Icterohaemorrhagiae serovar Lai (strain 56601).